The chain runs to 539 residues: Phosphoenolpyruvate carboxykinase (ATP) (539 aa).

The substrate site is built by R64, Y206, and K212. ATP contacts are provided by residues K212, H231, and 247–255; that span reads GLSGTGKTT. Residues K212 and H231 each contribute to the Mn(2+) site. A Mn(2+)-binding site is contributed by D268. ATP-binding positions include E296, R332, 448-449, and T454; that span reads RI. R332 serves as a coordination point for substrate.

This sequence belongs to the phosphoenolpyruvate carboxykinase (ATP) family. In terms of assembly, monomer. Requires Mn(2+) as cofactor.

The protein resides in the cytoplasm. It catalyses the reaction oxaloacetate + ATP = phosphoenolpyruvate + ADP + CO2. Its pathway is carbohydrate biosynthesis; gluconeogenesis. In terms of biological role, involved in the gluconeogenesis. Catalyzes the conversion of oxaloacetate (OAA) to phosphoenolpyruvate (PEP) through direct phosphoryl transfer between the nucleoside triphosphate and OAA. This Pectobacterium carotovorum subsp. carotovorum (strain PC1) protein is Phosphoenolpyruvate carboxykinase (ATP).